The sequence spans 114 residues: Large ribosomal subunit protein bL17 (114 aa).

It belongs to the bacterial ribosomal protein bL17 family. Part of the 50S ribosomal subunit. Contacts protein L32.

The chain is Large ribosomal subunit protein bL17 from Elusimicrobium minutum (strain Pei191).